We begin with the raw amino-acid sequence, 78 residues long: Delta-conotoxin TxVIA (78 aa).

Positions 1–22 (MKLTCMMIVAVLFLTAWTFATA) are cleaved as a signal peptide. The propeptide occupies 23–49 (DDPRNGLGNLFSNAHHEMKNPEASKLN). Cystine bridges form between cysteine 53–cysteine 68, cysteine 60–cysteine 72, and cysteine 67–cysteine 77. The residue at position 59 (methionine 59) is a Methionine sulfoxide; partial.

This sequence belongs to the conotoxin O1 superfamily. As to expression, expressed by the venom duct.

It is found in the secreted. Delta-conotoxins bind to site 6 of voltage-gated sodium channels (Nav) and inhibit the inactivation process. Binding of this toxin is strongly calcium-dependent but not voltage-dependent. The binding site is most likely on the extracellular side of the sodium channel. Binds receptor sites on both mollusk and rat central nervous system, but despite its high affinity binding to rat sodium channel, it has no functional effect in vivo and in vitro on it. Also has no effect on Gambusia fish. Is important in mollusk for the paralysis of the prey. Upon injection of the peptide, a subordinate lobster assumes an exaggerated dominant posture (of a 'King-Kong' lobster!). The protein is Delta-conotoxin TxVIA of Conus textile (Cloth-of-gold cone).